Here is a 132-residue protein sequence, read N- to C-terminus: Fibroblast growth factor 1 (132 aa).

Heparin is bound by residues asparagine 10 and 108 to 120 (KTKP…FGQK).

The protein belongs to the heparin-binding growth factors family.

Its subcellular location is the secreted. The protein localises to the cytoplasm. It localises to the cell cortex. The protein resides in the cytosol. It is found in the nucleus. In terms of biological role, plays an important role in the regulation of cell survival, cell division, angiogenesis, cell differentiation and cell migration. Functions as a potent mitogen in vitro. Acts as a ligand for FGFR1 and integrins. Binds to FGFR1 in the presence of heparin leading to FGFR1 dimerization and activation via sequential autophosphorylation on tyrosine residues which act as docking sites for interacting proteins, leading to the activation of several signaling cascades. Binds to integrins. Its binding to integrins and subsequent ternary complex formation with integrins and FGFR1 are essential for FGF1 signaling. This is Fibroblast growth factor 1 (fgf1) from Notophthalmus viridescens (Eastern newt).